A 469-amino-acid chain; its full sequence is Glutamate--tRNA ligase (469 aa).

Positions 9 to 19 match the 'HIGH' region motif; that stretch reads PSPTGFLHVGG. The short motif at 236–240 is the 'KMSKS' region element; that stretch reads KLSKR. Lys239 contacts ATP.

Belongs to the class-I aminoacyl-tRNA synthetase family. Glutamate--tRNA ligase type 1 subfamily. In terms of assembly, monomer.

It is found in the cytoplasm. It carries out the reaction tRNA(Glu) + L-glutamate + ATP = L-glutamyl-tRNA(Glu) + AMP + diphosphate. In terms of biological role, catalyzes the attachment of glutamate to tRNA(Glu) in a two-step reaction: glutamate is first activated by ATP to form Glu-AMP and then transferred to the acceptor end of tRNA(Glu). This chain is Glutamate--tRNA ligase, found in Pseudoalteromonas atlantica (strain T6c / ATCC BAA-1087).